The sequence spans 82 residues: Penaeidin-3i (82 aa).

The N-terminal stretch at 1–19 (MRLVVCLVFLASFALVCQG) is a signal peptide. Glutamine 20 bears the Pyrrolidone carboxylic acid mark. 2 cysteine pairs are disulfide-bonded: cysteine 55-cysteine 73 and cysteine 67-cysteine 74. Position 81 is a serine amide (serine 81).

The protein belongs to the penaeidin family.

The protein localises to the cytoplasmic granule. Antibacterial and antifungal activity. Presents chitin-binding activity. This Penaeus vannamei (Whiteleg shrimp) protein is Penaeidin-3i.